Here is a 188-residue protein sequence, read N- to C-terminus: Ion-translocating oxidoreductase complex subunit B (188 aa).

The segment at 1–26 is hydrophobic; the sequence is MNGVLLAIGVLLPICLASGALLGYAA. Residues 32-90 enclose the 4Fe-4S domain; the sequence is QGDPVAERVNALLPQTQCGQCGYPGCKPYAEAIAAGDRINKCPPGGEATIQALADLLDL. Residues cysteine 49, cysteine 52, cysteine 57, cysteine 73, cysteine 113, cysteine 116, cysteine 119, cysteine 123, cysteine 143, cysteine 146, cysteine 149, and cysteine 153 each contribute to the [4Fe-4S] cluster site. 4Fe-4S ferredoxin-type domains are found at residues 104 to 133 and 134 to 163; these read RVAY…GAAR and LMHT…MREI.

It belongs to the 4Fe4S bacterial-type ferredoxin family. RnfB subfamily. In terms of assembly, the complex is composed of six subunits: RnfA, RnfB, RnfC, RnfD, RnfE and RnfG. It depends on [4Fe-4S] cluster as a cofactor.

It localises to the cell inner membrane. Its function is as follows. Part of a membrane-bound complex that couples electron transfer with translocation of ions across the membrane. The chain is Ion-translocating oxidoreductase complex subunit B from Pseudomonas paraeruginosa (strain DSM 24068 / PA7) (Pseudomonas aeruginosa (strain PA7)).